We begin with the raw amino-acid sequence, 497 residues long: Acetyl-coenzyme A carboxylase carboxyl transferase subunit beta, chloroplastic (497 aa).

Residues 30 to 50 (GPVENTTVNEDPTRNDTDKNI) form a disordered region. Positions 40–50 (DPTRNDTDKNI) are enriched in basic and acidic residues. Positions 230–497 (VQCECENCYG…FFPLNQNSIK (268 aa)) constitute a CoA carboxyltransferase N-terminal domain. The Zn(2+) site is built by Cys232, Cys237, Cys253, and Cys256. Residues 232–256 (CECENCYGVNYKKSLNSKMNICEQC) form a C4-type zinc finger.

Belongs to the AccD/PCCB family. Acetyl-CoA carboxylase is a heterohexamer composed of biotin carboxyl carrier protein, biotin carboxylase and 2 subunits each of ACCase subunit alpha and ACCase plastid-coded subunit beta (accD). The cofactor is Zn(2+).

It localises to the plastid. The protein resides in the chloroplast stroma. It catalyses the reaction N(6)-carboxybiotinyl-L-lysyl-[protein] + acetyl-CoA = N(6)-biotinyl-L-lysyl-[protein] + malonyl-CoA. It functions in the pathway lipid metabolism; malonyl-CoA biosynthesis; malonyl-CoA from acetyl-CoA: step 1/1. In terms of biological role, component of the acetyl coenzyme A carboxylase (ACC) complex. Biotin carboxylase (BC) catalyzes the carboxylation of biotin on its carrier protein (BCCP) and then the CO(2) group is transferred by the transcarboxylase to acetyl-CoA to form malonyl-CoA. The sequence is that of Acetyl-coenzyme A carboxylase carboxyl transferase subunit beta, chloroplastic from Gossypium hirsutum (Upland cotton).